The sequence spans 326 residues: Biotin synthase (326 aa).

The 225-residue stretch at N42 to A266 folds into the Radical SAM core domain. C57, C61, and C64 together coordinate [4Fe-4S] cluster. Residues C101, C132, C192, and R264 each contribute to the [2Fe-2S] cluster site.

Belongs to the radical SAM superfamily. Biotin synthase family. As to quaternary structure, homodimer. [4Fe-4S] cluster serves as cofactor. The cofactor is [2Fe-2S] cluster.

The enzyme catalyses (4R,5S)-dethiobiotin + (sulfur carrier)-SH + 2 reduced [2Fe-2S]-[ferredoxin] + 2 S-adenosyl-L-methionine = (sulfur carrier)-H + biotin + 2 5'-deoxyadenosine + 2 L-methionine + 2 oxidized [2Fe-2S]-[ferredoxin]. The protein operates within cofactor biosynthesis; biotin biosynthesis; biotin from 7,8-diaminononanoate: step 2/2. Its function is as follows. Catalyzes the conversion of dethiobiotin (DTB) to biotin by the insertion of a sulfur atom into dethiobiotin via a radical-based mechanism. The protein is Biotin synthase of Ehrlichia chaffeensis (strain ATCC CRL-10679 / Arkansas).